We begin with the raw amino-acid sequence, 401 residues long: Elongation factor Tu 2 (401 aa).

One can recognise a tr-type G domain in the interval 10–209 (KPHVNVGTIG…AVDEYIPTPV (200 aa)). A G1 region spans residues 19-26 (GHVDHGKT). Position 19 to 26 (19 to 26 (GHVDHGKT)) interacts with GTP. Residue threonine 26 participates in Mg(2+) binding. The tract at residues 60-64 (GITIA) is G2. Positions 81–84 (DCPG) are G3. Residues 81 to 85 (DCPGH) and 136 to 139 (NKVD) contribute to the GTP site. Residues 136–139 (NKVD) form a G4 region. The tract at residues 174–176 (SAL) is G5.

This sequence belongs to the TRAFAC class translation factor GTPase superfamily. Classic translation factor GTPase family. EF-Tu/EF-1A subfamily. In terms of assembly, monomer.

The protein localises to the cytoplasm. It carries out the reaction GTP + H2O = GDP + phosphate + H(+). Its function is as follows. GTP hydrolase that promotes the GTP-dependent binding of aminoacyl-tRNA to the A-site of ribosomes during protein biosynthesis. The sequence is that of Elongation factor Tu 2 from Roseiflexus castenholzii (strain DSM 13941 / HLO8).